The sequence spans 726 residues: L-lysine 6-oxidase (726 aa).

A cross-link (4'-cysteinyl-tryptophylquinone (Cys-Trp)) is located at residues 516-581; sequence CTIQTVNFSE…LPPAYYSYWW (66 aa). A Tryptophylquinone modification is found at tryptophan 581.

Homotetramer. Cysteine tryptophylquinone residue serves as cofactor. The cysteine tryptophylquinone (CTQ) is generated by oxidation of the indole ring of a tryptophan residue to form tryptophylquinone, followed by covalent cross-linking with a cysteine residue.

Its subcellular location is the secreted. It carries out the reaction L-lysine + O2 + H2O = (S)-2-amino-6-oxohexanoate + H2O2 + NH4(+). With respect to regulation, inhibited by aminoguanidine, amiloride and beta-aminopropionitrile. In terms of biological role, has antibacterial activity against a wide spectrum of Gram-positive and Gram-negative bacteria including nosocomial isolates of S.aureus and Pseudomonas sp. The antimicrobial activity is due to hydrogen peroxide generated by its lysine oxidase activity. Also has autotoxic activity. Involved in biofilm differentiation; responsible for cell death within microcolonies during biofilm development which is linked to the generation of a phenotypically diverse dispersal population and thus may play a role in colonization. This is L-lysine 6-oxidase (lodA) from Marinomonas mediterranea (strain ATCC 700492 / JCM 21426 / NBRC 103028 / MMB-1).